A 256-amino-acid chain; its full sequence is Leucine-rich repeat-containing protein 18 (256 aa).

8 LRR repeats span residues 28-49 (GRKR…ILRL), 51-72 (EIDE…ISKF), 74-95 (NLRW…IGQM), 97-118 (SLLF…VELN), 122-144 (NIRT…GALK), 145-167 (ELHE…SKLP), 168-189 (KLKK…DMFV), and 194-215 (RLEN…QKCQ).

It localises to the cytoplasm. Functionally, may be involved in the regulation of spermatogenesis and sperm maturation. The protein is Leucine-rich repeat-containing protein 18 (Lrrc18) of Rattus norvegicus (Rat).